The following is a 187-amino-acid chain: Large ribosomal subunit protein uL5 (187 aa).

This sequence belongs to the universal ribosomal protein uL5 family. As to quaternary structure, part of the 50S ribosomal subunit; part of the 5S rRNA/L5/L18/L25 subcomplex. Contacts the 5S rRNA and the P site tRNA. Forms a bridge to the 30S subunit in the 70S ribosome.

Its function is as follows. This is one of the proteins that bind and probably mediate the attachment of the 5S RNA into the large ribosomal subunit, where it forms part of the central protuberance. In the 70S ribosome it contacts protein S13 of the 30S subunit (bridge B1b), connecting the 2 subunits; this bridge is implicated in subunit movement. Contacts the P site tRNA; the 5S rRNA and some of its associated proteins might help stabilize positioning of ribosome-bound tRNAs. The polypeptide is Large ribosomal subunit protein uL5 (Dinoroseobacter shibae (strain DSM 16493 / NCIMB 14021 / DFL 12)).